Consider the following 85-residue polypeptide: Large ribosomal subunit protein bL27 (85 aa).

The interval Met-1–Leu-21 is disordered.

The protein belongs to the bacterial ribosomal protein bL27 family.

This is Large ribosomal subunit protein bL27 from Aeromonas hydrophila subsp. hydrophila (strain ATCC 7966 / DSM 30187 / BCRC 13018 / CCUG 14551 / JCM 1027 / KCTC 2358 / NCIMB 9240 / NCTC 8049).